Here is a 992-residue protein sequence, read N- to C-terminus: Ribosome quality control complex subunit NEMF homolog (992 aa).

Residues 214–231 are compositionally biased toward basic and acidic residues; it reads KETTEETPEAEDKPEKGG. The segment at 214-245 is disordered; that stretch reads KETTEETPEAEDKPEKGGKKQRKKQQNTKLEQ. 2 coiled-coil regions span residues 331-370 and 481-514; these read STQESQKIDMKTLQQEREALKKLSNVKNDHAKRLEELTKV and SAAQKEKKTVDASQKALKSAERKTQQTLKEVRTI. Disordered stretches follow at residues 688-715 and 771-895; these read EVEHDLLSDNEDADSNINLSEPSSNTEI and GPSR…GDVD. Over residues 702–715 the composition is skewed to polar residues; it reads SNINLSEPSSNTEI. Residues 774–839 are a coiled coil; sequence RKKQVSAKKT…QDDEEREIRM (66 aa). A compositionally biased stretch (basic and acidic residues) spans 782-796; sequence KTKEDKARAKQEAAK. Basic residues predominate over residues 814–825; it reads RGQKGKLKKMKQ. Basic and acidic residues predominate over residues 845 to 874; sequence SGKEKPQASADKVVEKSESTKEYVKPEKSA.

Belongs to the NEMF family. Component of the ribosome quality control complex (RQC), composed of at least the E3 ubiquitin ligase l(3)76BDr/LTN1 and Clbn/NEMF associated with the 60S ribosomal subunit. The complex probably also contains TCF25 as well as TER94/VCP and its ubiquitin-binding cofactors. Interacts (via its C-terminus) with pros (via its homeobox). Interacts (via its N-terminus) with emb. As to expression, expressed in enterocytes (at protein level).

The protein localises to the nucleus. It localises to the cytoplasm. Its subcellular location is the mitochondrion outer membrane. Key component of the ribosome quality control complex (RQC), a ribosome-associated complex that mediates the extraction of incompletely synthesized nascent chains from stalled ribosomes as well as their ubiquitin-mediated proteasomal degradation. Thereby, frees 60S subunit ribosomes from the stalled translation complex and prevents the accumulation of nascent polypeptide chains that are potentially toxic for the cell. Within the RQC complex, Clbn/NEMF specifically binds stalled 60S ribosomal subunits by recognizing an exposed, nascent chain-conjugated tRNA moiety. Following binding to stalled 60S ribosomal subunits, Clbn/NEMF mediates CAT tailing by recruiting alanine-charged tRNA to the A-site and directing the elongation of stalled nascent chains independently of mRNA or 40S subunits, leading to non-templated C-terminal alanine extensions (CAT tails). On mitochondrial surface, plays a role in mitochondrial-stress induced translational termination impairment and protein carboxyl terminal extension (MISTERMINATE). Plays a role in regulating nuclear transport possibly through directly binding to both emb and cargo proteins. Plays a role in the regulation of G1-to-S cell cycle transition. Regulates S phase checkpoint by antagonizing E2F1 activity. Together with hid and tefu/ATM, plays a role in DNA damage-induced apoptosis through both p53-dependent and -independent activity. Plays an essential role in the regulation of mitochondrial structure and redox state in enterocytes which is essential for the control of intestinal stem cells proliferation and intestinal homeostasis. This Drosophila melanogaster (Fruit fly) protein is Ribosome quality control complex subunit NEMF homolog.